Here is a 284-residue protein sequence, read N- to C-terminus: 16S rRNA (guanine(1405)-N(7))-methyltransferase (284 aa).

S-adenosyl-L-methionine contacts are provided by residues Tyr73, 111 to 113, Arg117, Ala142, Asp165, 191 to 192, Leu208, and Gln217; these read HAS and DL.

The protein belongs to the methyltransferase superfamily. Aminoglycoside resistance family.

It carries out the reaction guanosine(1405) in 16S rRNA + S-adenosyl-L-methionine = N(7)-methylguanosine(1405) in 16S rRNA + S-adenosyl-L-homocysteine. Its function is as follows. Specifically methylates the N(7) position of guanine 1405 in 16S rRNA. Confers resistance to various aminoglycosides, including gentamicin and kanamycin. The sequence is that of 16S rRNA (guanine(1405)-N(7))-methyltransferase (Krm) from Frankia casuarinae (strain DSM 45818 / CECT 9043 / HFP020203 / CcI3).